The following is a 476-amino-acid chain: Aspartyl/glutamyl-tRNA(Asn/Gln) amidotransferase subunit B (476 aa).

The protein belongs to the GatB/GatE family. GatB subfamily. In terms of assembly, heterotrimer of A, B and C subunits.

The enzyme catalyses L-glutamyl-tRNA(Gln) + L-glutamine + ATP + H2O = L-glutaminyl-tRNA(Gln) + L-glutamate + ADP + phosphate + H(+). The catalysed reaction is L-aspartyl-tRNA(Asn) + L-glutamine + ATP + H2O = L-asparaginyl-tRNA(Asn) + L-glutamate + ADP + phosphate + 2 H(+). Allows the formation of correctly charged Asn-tRNA(Asn) or Gln-tRNA(Gln) through the transamidation of misacylated Asp-tRNA(Asn) or Glu-tRNA(Gln) in organisms which lack either or both of asparaginyl-tRNA or glutaminyl-tRNA synthetases. The reaction takes place in the presence of glutamine and ATP through an activated phospho-Asp-tRNA(Asn) or phospho-Glu-tRNA(Gln). This Neisseria gonorrhoeae (strain ATCC 700825 / FA 1090) protein is Aspartyl/glutamyl-tRNA(Asn/Gln) amidotransferase subunit B.